The sequence spans 250 residues: NAD-dependent protein deacetylase 2 (250 aa).

A Deacetylase sirtuin-type domain is found at 4–250 (MDSKNLFKKA…LRNIWNLIKS (247 aa)). NAD(+) contacts are provided by Ala29, Thr33, Phe40, Arg41, Gln107, Ile109, Asp110, and His125. A nicotinamide-binding site is contributed by Phe40. The nicotinamide site is built by Ile109 and Asp110. His125 functions as the Proton acceptor in the catalytic mechanism. Residues Cys133, Cys136, Cys158, and Cys161 each coordinate Zn(2+). 3 residues coordinate NAD(+): Ser198, Ser199, and Asn219.

Belongs to the sirtuin family. Class U subfamily. The cofactor is Zn(2+).

Its subcellular location is the cytoplasm. The enzyme catalyses N(6)-acetyl-L-lysyl-[protein] + NAD(+) + H2O = 2''-O-acetyl-ADP-D-ribose + nicotinamide + L-lysyl-[protein]. Its function is as follows. NAD-dependent protein deacetylase which modulates the activities of several enzymes which are inactive in their acetylated form. The protein is NAD-dependent protein deacetylase 2 of Caldanaerobacter subterraneus subsp. tengcongensis (strain DSM 15242 / JCM 11007 / NBRC 100824 / MB4) (Thermoanaerobacter tengcongensis).